Consider the following 349-residue polypeptide: N-formyl peptide receptor 3 (349 aa).

Topologically, residues 1–27 (METNFSIPLNETEEVLPEPAGHTVLWI) are extracellular. N-linked (GlcNAc...) asparagine glycans are attached at residues Asn4 and Asn10. A helical transmembrane segment spans residues 28–50 (FSLLVHGVTFVFGVLGNGLVIWV). Residues 51 to 61 (AGFRMTRTVNT) lie on the Cytoplasmic side of the membrane. The chain crosses the membrane as a helical span at residues 62–83 (ICYLNLALADFSFSAILPFRMV). Residues 84–100 (SVAMREKWPFGSFLCKL) are Extracellular-facing. Cys98 and Cys176 are joined by a disulfide. The helical transmembrane segment at 101 to 121 (VHVMIDINLFVSVYLITIIAL) threads the bilayer. Topologically, residues 122 to 140 (DRCICVLHPAWAQNHRTMS) are cytoplasmic. The helical transmembrane segment at 141–162 (LAKRVMTGLWILTIVLTLPNFI) threads the bilayer. At 163-205 (FWTTIRTTNGDTYCIFNFAFWGDTAVERLNVFITMAKVFLILH) the chain is on the extracellular side. The helical transmembrane segment at 206–226 (FIIGFSMPMSIITVCYGIIAA) threads the bilayer. Residues 227–242 (KIHRNHMIKSSRPLRV) are Cytoplasmic-facing. The helical transmembrane segment at 243–266 (FAAVVASFFICWFPYELIGILMAV) threads the bilayer. Over 267–286 (WLKEMLLNGKYKIILVLINP) the chain is Extracellular. The chain crosses the membrane as a helical span at residues 287 to 306 (TSSLAFFNSCLNPILYVFMG). At 307-349 (RNFQERLIRSLPTSLERALTEVPDSAQTSNTHTTSASPPEETE) the chain is on the cytoplasmic side. A disordered region spans residues 327–349 (EVPDSAQTSNTHTTSASPPEETE). A compositionally biased stretch (polar residues) spans 331–343 (SAQTSNTHTTSAS).

The protein belongs to the G-protein coupled receptor 1 family.

The protein localises to the cell membrane. Its function is as follows. Low affinity receptor for N-formyl-methionyl peptides, which are powerful neutrophils chemotactic factors. Binding of FMLP to the receptor causes activation of neutrophils. This response is mediated via a G-protein that activates a phosphatidylinositol-calcium second messenger system. This Pan troglodytes (Chimpanzee) protein is N-formyl peptide receptor 3 (FPR3).